A 270-amino-acid polypeptide reads, in one-letter code: MPELPEVETTVRGLRPPLEGRRLTRVETRRADLRRPFPADLRQRMTGATITGLGRRAKYGLIETDRGDVMVFHLGMSGRWRIDPSEIGAHDHLVLETDEGRTLSLCDPRRFGSVDLVRGEELAGFGPFKALGPEPLGPDLTGAHLAGALEGRVAPIKAMLLDQRIVAGLGNIYVCEALHMTGIAPTTMAGRIAKKRLDRLVDSIREVLAAAIEAGGSTLRDYARPDGELGYFAKQWRVYGREGEPCHCGTVIRRRVDGGRSTFYCPKCQK.

Pro2 functions as the Schiff-base intermediate with DNA in the catalytic mechanism. The active-site Proton donor is Glu3. Lys58 functions as the Proton donor; for beta-elimination activity in the catalytic mechanism. DNA-binding residues include His90, Arg109, and Arg152. The FPG-type zinc-finger motif lies at 237–270 (RVYGREGEPCHCGTVIRRRVDGGRSTFYCPKCQK). Arg260 acts as the Proton donor; for delta-elimination activity in catalysis.

This sequence belongs to the FPG family. As to quaternary structure, monomer. Zn(2+) is required as a cofactor.

The catalysed reaction is Hydrolysis of DNA containing ring-opened 7-methylguanine residues, releasing 2,6-diamino-4-hydroxy-5-(N-methyl)formamidopyrimidine.. It carries out the reaction 2'-deoxyribonucleotide-(2'-deoxyribose 5'-phosphate)-2'-deoxyribonucleotide-DNA = a 3'-end 2'-deoxyribonucleotide-(2,3-dehydro-2,3-deoxyribose 5'-phosphate)-DNA + a 5'-end 5'-phospho-2'-deoxyribonucleoside-DNA + H(+). Involved in base excision repair of DNA damaged by oxidation or by mutagenic agents. Acts as a DNA glycosylase that recognizes and removes damaged bases. Has a preference for oxidized purines, such as 7,8-dihydro-8-oxoguanine (8-oxoG). Has AP (apurinic/apyrimidinic) lyase activity and introduces nicks in the DNA strand. Cleaves the DNA backbone by beta-delta elimination to generate a single-strand break at the site of the removed base with both 3'- and 5'-phosphates. The protein is Formamidopyrimidine-DNA glycosylase of Rhizorhabdus wittichii (strain DSM 6014 / CCUG 31198 / JCM 15750 / NBRC 105917 / EY 4224 / RW1) (Sphingomonas wittichii).